A 557-amino-acid chain; its full sequence is Organic cation/carnitine transporter 2 (557 aa).

Topologically, residues 1–20 (MRDYDEVTAFLGEWGPFQRL) are cytoplasmic. Residues 21–41 (IFFLLSASIIPNGFTGLSSVF) form a helical membrane-spanning segment. At 42–142 (LIATPEHRCR…NLVCEDDWKA (101 aa)) the chain is on the extracellular side. N-linked (GlcNAc...) asparagine glycosylation is found at N57, N64, and N91. The chain crosses the membrane as a helical span at residues 143–163 (PLTISLFFVGVLLGSFISGQL). Residues 164–172 (SDRFGRKNV) lie on the Cytoplasmic side of the membrane. The helical transmembrane segment at 173 to 193 (LFVTMGMQTGFSFLQIFSKNF) threads the bilayer. Over 194-197 (EMFV) the chain is Extracellular. Residues 198 to 218 (VLFVLVGMGQISNYVAAFVLG) form a helical membrane-spanning segment. 218 to 225 (GTEILGKS) is an ATP binding site. Topologically, residues 219–232 (TEILGKSVRIIFST) are cytoplasmic. A helical membrane pass occupies residues 233–253 (LGVCIFYAFGYMVLPLFAYFI). At 254-257 (RDWR) the chain is on the extracellular side. The chain crosses the membrane as a helical span at residues 258 to 278 (MLLVALTMPGVLCVALWWFIP). Topologically, residues 279 to 341 (ESPRWLISQG…LDLLRTWNIR (63 aa)) are cytoplasmic. The helical transmembrane segment at 342 to 362 (MVTIMSIMLWMTISVGYFGLS) threads the bilayer. Residues 363-373 (LDTPNLHGDIF) lie on the Extracellular side of the membrane. The helical transmembrane segment at 374 to 394 (VNCFLSAMVEVPAYVLAWLLL) threads the bilayer. Topologically, residues 395 to 406 (QYLPRRYSMATA) are cytoplasmic. Residues 407 to 427 (LFLGGSVLLFMQLVPPDLYYL) form a helical membrane-spanning segment. Residues 428–430 (ATV) lie on the Extracellular side of the membrane. The helical transmembrane segment at 431 to 451 (LVMVGKFGVTAAFSMVYVYTA) threads the bilayer. Topologically, residues 452–462 (ELYPTVVRNMG) are cytoplasmic. The helical transmembrane segment at 463–483 (VGVSSTASRLGSILSPYFVYL) threads the bilayer. Topologically, residues 484 to 488 (GAYDR) are extracellular. Phosphotyrosine is present on Y486. A helical membrane pass occupies residues 489-509 (FLPYILMGSLTILTAILTLFL). The tract at residues 535–557 (TPSHTRMLKDGQERPTILKSTAF) is disordered. The residue at position 550 (T550) is a Phosphothreonine.

The protein belongs to the major facilitator (TC 2.A.1) superfamily. Organic cation transporter (TC 2.A.1.19) family. Interacts with PDZK1. Post-translationally, glycosylated. Glycosylation affects the expression levels. In terms of processing, not glycosylated. As to expression, strongly expressed in kidney, skeletal muscle, heart and placenta. Primarily expressed by surface epithelial cells of the colon (at protein level). Expressed in CD68 macrophage and CD43 T-cells but not in CD20 B-cells. In testis, localized to Sertoli cell basal membranes, peritubular myoid cells and Leydig cells.

It localises to the cell membrane. The protein resides in the apical cell membrane. The protein localises to the basal cell membrane. It is found in the endoplasmic reticulum. The enzyme catalyses (R)-carnitine(out) + Na(+)(out) = (R)-carnitine(in) + Na(+)(in). It carries out the reaction glycine betaine(out) + Na(+)(out) = glycine betaine(in) + Na(+)(in). It catalyses the reaction glycine betaine(out) + (R)-carnitine(in) = glycine betaine(in) + (R)-carnitine(out). The catalysed reaction is O-butanoyl-(R)-carnitine(out) + Na(+)(out) = O-butanoyl-(R)-carnitine(in) + Na(+)(in). The enzyme catalyses O-acetyl-(R)-carnitine(out) + Na(+)(out) = O-acetyl-(R)-carnitine(in) + Na(+)(in). It carries out the reaction O-propanoyl-(R)-carnitine(out) + Na(+)(out) = O-propanoyl-(R)-carnitine(in) + Na(+)(in). It catalyses the reaction (S)-carnitine(out) + Na(+)(out) = (S)-carnitine(in) + Na(+)(in). The catalysed reaction is an O-acyl-(R)-carnitine(out) + Na(+)(out) = an O-acyl-(R)-carnitine(in) + Na(+)(in). The enzyme catalyses L-glutamyl-L-arginyl-glycyl-L-methionyl-L-threonine(out) + Na(+)(out) = L-glutamyl-L-arginyl-glycyl-L-methionyl-L-threonine(in) + Na(+)(in). It carries out the reaction N,N-dimethylglycine(out) + Na(+)(out) = N,N-dimethylglycine(in) + Na(+)(in). With respect to regulation, inhibited by emetine, quinidine and verapamil. The IC(50) of emetine is 4.2 uM. Not inhibited by valproic acid. Transport of (R)-carnitine is stimulated by cholesterol in the plasma membrane. Its function is as follows. Sodium-ion dependent, high affinity carnitine transporter. Involved in the active cellular uptake of carnitine. Transports one sodium ion with one molecule of carnitine. Also transports organic cations such as tetraethylammonium (TEA) without the involvement of sodium. Relative uptake activity ratio of carnitine to TEA is 11.3. In intestinal epithelia, transports the quorum-sensing pentapeptide CSF (competence and sporulation factor) from B.subtilis which induces cytoprotective heat shock proteins contributing to intestinal homeostasis. May also contribute to regulate the transport of organic compounds in testis across the blood-testis-barrier. Retained in the ER, unable to perform carnitine uptake. The polypeptide is Organic cation/carnitine transporter 2 (Homo sapiens (Human)).